Consider the following 255-residue polypeptide: Flagellar L-ring protein (255 aa).

The N-terminal stretch at 1 to 25 (MRRHSTRKTVARVAVVALAVGVLAG) is a signal peptide. Residue cysteine 26 is the site of N-palmitoyl cysteine attachment. Residue cysteine 26 is the site of S-diacylglycerol cysteine attachment.

The protein belongs to the FlgH family. The basal body constitutes a major portion of the flagellar organelle and consists of four rings (L,P,S, and M) mounted on a central rod.

The protein resides in the cell outer membrane. It is found in the bacterial flagellum basal body. Functionally, assembles around the rod to form the L-ring and probably protects the motor/basal body from shearing forces during rotation. This is Flagellar L-ring protein from Rhodospirillum rubrum (strain ATCC 11170 / ATH 1.1.1 / DSM 467 / LMG 4362 / NCIMB 8255 / S1).